A 124-amino-acid chain; its full sequence is Con-Ins Tx1 (124 aa).

The signal sequence occupies residues 1 to 24 (MTTSSYFLLVALGLLLYVFQSSFG). Intrachain disulfides connect Cys29/Cys107, Cys41/Cys110, Cys53/Cys123, and Cys109/Cys114. Pro34 is subject to 4-hydroxyproline; partial. Positions 59-92 (EQGGANNARANTGRTSSLMKRRGFLSLLKKRGKR) are cleaved as a propeptide — c peptide. Glu118 is modified (4-carboxyglutamate; partial).

The protein belongs to the insulin family. In terms of assembly, heterodimer of A and B chains; disulfide-linked. Expressed by the venom gland.

The protein resides in the secreted. This venom insulin facilitates prey capture by rapidly inducing hypoglycemic shock. Intraperitoneal injection of this peptide into zebrafish lowers blood glucose with the same potency than human insulin. In vivo, when applied to water, this peptide reduces overall locomotor activity of zebrafish larvae, observed as a significant decrease in the percentage of time spent swimming and movement frequency. The polypeptide is Con-Ins Tx1 (Conus textile (Cloth-of-gold cone)).